A 454-amino-acid polypeptide reads, in one-letter code: Venom prothrombin activator porpharin-D (454 aa).

An N-terminal signal peptide occupies residues 1-20 (MAPQLLLCLILTFLWSLPEA). A propeptide spanning residues 21-40 (ESNVFLKSKEANRFLQRTKR) is cleaved from the precursor. Positions 41-86 (SNSLFEEFRPGNIERECIEEKCSKEEAREIFKDNEKTEAFWNVYVD) constitute a Gla domain. A 4-carboxyglutamate mark is found at E46, E47, E54, E56, E59, E60, E65, E66, E69, and E75. C57 and C62 are disulfide-bonded. An EGF-like 1; calcium-binding domain is found at 86 to 122 (DGDQCSSNPCHYGGTCKDGIGSYTCTCLPNYEGKNCE). Cystine bridges form between C90–C101, C95–C110, C112–C121, C129–C140, C136–C149, C151–C164, C172–C316, C216–C221, C236–C252, C364–C378, and C389–C417. An O-linked (Hex...) serine glycan is attached at S92. An EGF-like 2 domain is found at 129-164 (CRFFNGNCWHFCKPVQNDTQCSCAESYRLGDDGHSC). Positions 182-209 (REASLPDFVQSQNATLLKKSDNPSPDIR) are cleaved as a propeptide — activation peptide. Positions 210–441 (IINGMDCKLG…FIPWIKAVMR (232 aa)) constitute a Peptidase S1 domain. Active-site charge relay system residues include H251 and D296. The Charge relay system role is filled by S393.

The protein belongs to the peptidase S1 family. Snake venom subfamily. Heterodimer of a light chain and a heavy chain; disulfide-linked. The vitamin K-dependent, enzymatic carboxylation of some glutamate residues allows the modified protein to bind calcium. As to expression, expressed by the venom gland.

The protein localises to the secreted. It carries out the reaction Selective cleavage of Arg-|-Thr and then Arg-|-Ile bonds in prothrombin to form thrombin.. Snake prothrombin activator that attacks the hemostatic system of prey. This protein is functionally similar to blood coagulation factor Xa. The polypeptide is Venom prothrombin activator porpharin-D (Pseudechis porphyriacus (Red-bellied black snake)).